The chain runs to 104 residues: N(4)-acetylcytidine amidohydrolase (104 aa).

Positions 6 to 102 (ITFYQRFEAD…SEFWVIEIRL (97 aa)) constitute an ASCH domain. Lysine 21 (proton acceptor) is an active-site residue. Threonine 24 acts as the Nucleophile in catalysis. Glutamate 74 acts as the Proton donor in catalysis.

It belongs to the N(4)-acetylcytidine amidohydrolase family.

It carries out the reaction N(4)-acetylcytidine + H2O = cytidine + acetate + H(+). The catalysed reaction is N(4)-acetyl-2'-deoxycytidine + H2O = 2'-deoxycytidine + acetate + H(+). It catalyses the reaction N(4)-acetylcytosine + H2O = cytosine + acetate + H(+). Its function is as follows. Catalyzes the hydrolysis of N(4)-acetylcytidine (ac4C). The protein is N(4)-acetylcytidine amidohydrolase of Haemophilus influenzae (strain PittEE).